The chain runs to 280 residues: MDSRVWLPLIGAHLLPRDISVITQMIANNNNTSISRSSTNSSKPEEKNSKKFLIERFLDDDPSPPASILSPSPKAAIPSPIINPAVEFVNGGYGVKNPLAPLISSFETTSIPCSTVSPSSLISSSKDEFQDSLTCHICGKKFGLQRLLNRHIKCHSDLKRYLCTFCGKGFNDTFDLKRHTRTHTGVRPYKCEQCEKSFTQRCSLESHLRKVHGVTHQYAYKERRSKVFVCEDCGYTDEKFEVYLSHIKVVHPFSAAYLRFTQLQKKNSSMKPEQLSKISL.

4 C2H2-type zinc fingers span residues 133 to 155 (LTCH…IKCH), 161 to 183 (YLCT…TRTH), 189 to 212 (YKCE…RKVH), and 228 to 251 (FVCE…KVVH).

Its subcellular location is the nucleus. Transcription factor. Involved in development of the hindgut, the male tail, and the excretory duct cell. Involved in modulating function of excretory duct cells. Plays a role in left/right patterning of cell fates in the hindgut. The chain is Transcription factor ovo-like homolog lin-48 from Caenorhabditis elegans.